The sequence spans 498 residues: Probable lysophospholipase BODYGUARD 3 (498 aa).

The signal sequence occupies residues Met1–Tyr55. Cys56 carries the N-palmitoyl cysteine lipid modification. Residues Val220–Pro326 form the AB hydrolase-1 domain. The active site involves His224. The active-site Nucleophile is Ser297. Catalysis depends on charge relay system residues Asp446 and His474.

The protein localises to the cell membrane. It localises to the secreted. The protein resides in the cell wall. Functionally, involved in cuticle development and morphogenesis. The polypeptide is Probable lysophospholipase BODYGUARD 3 (Arabidopsis thaliana (Mouse-ear cress)).